A 124-amino-acid chain; its full sequence is Small ribosomal subunit protein uS12 (124 aa).

Asp89 is subject to 3-methylthioaspartic acid.

The protein belongs to the universal ribosomal protein uS12 family. As to quaternary structure, part of the 30S ribosomal subunit. Contacts proteins S8 and S17. May interact with IF1 in the 30S initiation complex.

In terms of biological role, with S4 and S5 plays an important role in translational accuracy. Interacts with and stabilizes bases of the 16S rRNA that are involved in tRNA selection in the A site and with the mRNA backbone. Located at the interface of the 30S and 50S subunits, it traverses the body of the 30S subunit contacting proteins on the other side and probably holding the rRNA structure together. The combined cluster of proteins S8, S12 and S17 appears to hold together the shoulder and platform of the 30S subunit. This Mannheimia succiniciproducens (strain KCTC 0769BP / MBEL55E) protein is Small ribosomal subunit protein uS12.